We begin with the raw amino-acid sequence, 856 residues long: Wall-associated receptor kinase 17 (856 aa).

A signal peptide spans 1–42 (MPSRSPACRPRGRNRRSAADAVARPLALALILVSTLPRAAHS). 2 N-linked (GlcNAc...) asparagine glycosylation sites follow: N171 and N234. The 38-residue stretch at 297–334 (FEKLCKYGTCVDAPTGAGYLCKCPSGYDGNPYVSDGCQ) folds into the EGF-like 1 domain. Intrachain disulfides connect C301-C306, C319-C333, C339-C353, C347-C362, and C364-C379. Positions 335–380 (DINECRNYNSNNCTYQNLCNNTLGGYTCSCPENNIGDGYRTGTGCN) constitute an EGF-like 2; calcium-binding domain. Residues N346 and N354 are each glycosylated (N-linked (GlcNAc...) asparagine). N380 is a glycosylation site (N-linked (GlcNAc...) asparagine). Residues 452–470 (VLGVSLVLMVTTTTAASCY) form a helical membrane-spanning segment. In terms of domain architecture, Protein kinase spans 527–805 (YSESRILGRG…VLQELRRSFT (279 aa)). Residues 533–541 (LGRGGQGTV) and K555 contribute to the ATP site. D652 functions as the Proton acceptor in the catalytic mechanism. Positions 816 to 844 (SIQENSEQEEKHLHESRSIPSLQSSEVST) are disordered. Residues 823–832 (QEEKHLHESR) show a composition bias toward basic and acidic residues. Residues 833 to 844 (SIPSLQSSEVST) show a composition bias toward polar residues.

It belongs to the protein kinase superfamily. Ser/Thr protein kinase family. Interacts with WAK17 isoform 2; the interaction is direct. Interacts with LRR5; the interaction is direct. In terms of assembly, interacts with WAK17 isoform 1; the interaction is direct. As to quaternary structure, (Microbial infection) Interacts with G.zeae CFEM1 (via CFEM domain); the interaction is direct. Interacts with G.zeae CFEMN1; the interaction is direct. Interacts with G.zeae CFEM5; the interaction is direct. Mn(2+) is required as a cofactor. It depends on Mg(2+) as a cofactor.

Its subcellular location is the cell membrane. The catalysed reaction is L-seryl-[protein] + ATP = O-phospho-L-seryl-[protein] + ADP + H(+). The enzyme catalyses L-threonyl-[protein] + ATP = O-phospho-L-threonyl-[protein] + ADP + H(+). In terms of biological role, kinase that contributes to activation of the hypersensitive response, a form of programmed cell death, upon fungal infection. Functionally, secreted protein that contributes to activation of the hypersensitive response, a form of programmed cell death, upon fungal infection. May sense the presence of fungal material and relay the signal to WAK17 isoform 1. This is Wall-associated receptor kinase 17 from Zea mays (Maize).